A 190-amino-acid polypeptide reads, in one-letter code: Glutathione peroxidase 2 (190 aa).

Residue Sec-40 is part of the active site. Residue Sec-40 is a non-standard amino acid, selenocysteine.

The protein belongs to the glutathione peroxidase family. As to quaternary structure, homotetramer.

The protein localises to the cytoplasm. Its subcellular location is the cytosol. It catalyses the reaction 2 glutathione + H2O2 = glutathione disulfide + 2 H2O. The enzyme catalyses a hydroperoxy polyunsaturated fatty acid + 2 glutathione = a hydroxy polyunsaturated fatty acid + glutathione disulfide + H2O. The catalysed reaction is tert-butyl hydroperoxide + 2 glutathione = tert-butanol + glutathione disulfide + H2O. It carries out the reaction cumene hydroperoxide + 2 glutathione = 2-phenylpropan-2-ol + glutathione disulfide + H2O. It catalyses the reaction (13S)-hydroperoxy-(9Z,11E)-octadecadienoate + 2 glutathione = (13S)-hydroxy-(9Z,11E)-octadecadienoate + glutathione disulfide + H2O. The enzyme catalyses (5S)-hydroperoxy-(6E,8Z,11Z,14Z)-eicosatetraenoate + 2 glutathione = (5S)-hydroxy-(6E,8Z,11Z,14Z)-eicosatetraenoate + glutathione disulfide + H2O. The catalysed reaction is (12R)-hydroperoxy-(5Z,8Z,10E,14Z)-eicosatetraenoate + 2 glutathione = (12R)-hydroxy-(5Z,8Z,10E,14Z)-eicosatetraenoate + glutathione disulfide + H2O. It carries out the reaction (15S)-hydroperoxy-(5Z,8Z,11Z,13E)-eicosatetraenoate + 2 glutathione = (15S)-hydroxy-(5Z,8Z,11Z,13E)-eicosatetraenoate + glutathione disulfide + H2O. Functionally, catalyzes the reduction of hydroperoxides in a glutathione-dependent manner thus regulating cellular redox homeostasis. Can reduce small soluble hydroperoxides such as H2O2, cumene hydroperoxide and tert-butyl hydroperoxide, as well as several fatty acid-derived hydroperoxides. Cannot reduce phosphatidycholine hydroperoxide. In Pongo pygmaeus (Bornean orangutan), this protein is Glutathione peroxidase 2 (GPX2).